The sequence spans 351 residues: Phosphoribosylformylglycinamidine cyclo-ligase (351 aa).

It belongs to the AIR synthase family.

The protein localises to the cytoplasm. The enzyme catalyses 2-formamido-N(1)-(5-O-phospho-beta-D-ribosyl)acetamidine + ATP = 5-amino-1-(5-phospho-beta-D-ribosyl)imidazole + ADP + phosphate + H(+). It participates in purine metabolism; IMP biosynthesis via de novo pathway; 5-amino-1-(5-phospho-D-ribosyl)imidazole from N(2)-formyl-N(1)-(5-phospho-D-ribosyl)glycinamide: step 2/2. The chain is Phosphoribosylformylglycinamidine cyclo-ligase from Burkholderia vietnamiensis (strain G4 / LMG 22486) (Burkholderia cepacia (strain R1808)).